Consider the following 365-residue polypeptide: Phospho-N-acetylmuramoyl-pentapeptide-transferase (365 aa).

10 consecutive transmembrane segments (helical) span residues 22-42 (YISV…LALG), 74-94 (TMGG…WGNL), 95-115 (TSIY…IGFF), 134-154 (KFAL…YLLS), 168-188 (SLYI…IING), 201-221 (GLAI…AYIE), 240-260 (LAEV…FLWF), 267-287 (VFMG…IAVM), 292-312 (LIFF…MLQV), and 342-362 (KVVI…FAAI).

Belongs to the glycosyltransferase 4 family. MraY subfamily. Mg(2+) is required as a cofactor.

It localises to the cell inner membrane. The catalysed reaction is UDP-N-acetyl-alpha-D-muramoyl-L-alanyl-gamma-D-glutamyl-meso-2,6-diaminopimeloyl-D-alanyl-D-alanine + di-trans,octa-cis-undecaprenyl phosphate = di-trans,octa-cis-undecaprenyl diphospho-N-acetyl-alpha-D-muramoyl-L-alanyl-D-glutamyl-meso-2,6-diaminopimeloyl-D-alanyl-D-alanine + UMP. The protein operates within cell wall biogenesis; peptidoglycan biosynthesis. Catalyzes the initial step of the lipid cycle reactions in the biosynthesis of the cell wall peptidoglycan: transfers peptidoglycan precursor phospho-MurNAc-pentapeptide from UDP-MurNAc-pentapeptide onto the lipid carrier undecaprenyl phosphate, yielding undecaprenyl-pyrophosphoryl-MurNAc-pentapeptide, known as lipid I. The polypeptide is Phospho-N-acetylmuramoyl-pentapeptide-transferase (Francisella tularensis subsp. holarctica (strain OSU18)).